A 39-amino-acid chain; its full sequence is Photosystem II reaction center protein L (39 aa).

The helical transmembrane segment at 18 to 38 (SLYWGLLLIFVLAVLFSNYFF) threads the bilayer.

It belongs to the PsbL family. In terms of assembly, PSII is composed of 1 copy each of membrane proteins PsbA, PsbB, PsbC, PsbD, PsbE, PsbF, PsbH, PsbI, PsbJ, PsbK, PsbL, PsbM, PsbT, PsbX, PsbY, PsbZ, Psb30/Ycf12, at least 3 peripheral proteins of the oxygen-evolving complex and a large number of cofactors. It forms dimeric complexes.

It localises to the plastid thylakoid membrane. In terms of biological role, one of the components of the core complex of photosystem II (PSII). PSII is a light-driven water:plastoquinone oxidoreductase that uses light energy to abstract electrons from H(2)O, generating O(2) and a proton gradient subsequently used for ATP formation. It consists of a core antenna complex that captures photons, and an electron transfer chain that converts photonic excitation into a charge separation. This subunit is found at the monomer-monomer interface and is required for correct PSII assembly and/or dimerization. The chain is Photosystem II reaction center protein L from Cuscuta gronovii (Common dodder).